We begin with the raw amino-acid sequence, 173 residues long: MPRTQRNDNFIDKTFTVMADIILKILPANQKAKEAFVYYRDGMSAQADGEYAEALDNYYEALKLEEDPNDRSYILYNIGIIHASNGDQEKALEYYNQSVDLNPRMPSALNNIAVIYHYQGEKAREEGREEEAEALYDKAAEYWKQAIRLAPNNYIEAQNWLKVTGRSEMDVFF.

TPR repeat units follow at residues 35 to 68, 72 to 105, and 120 to 153; these read AFVY…EEDP, SYIL…NPRM, and GEKA…APNN.

The protein belongs to the Ycf3 family.

Its subcellular location is the cellular thylakoid membrane. Essential for the assembly of the photosystem I (PSI) complex. May act as a chaperone-like factor to guide the assembly of the PSI subunits. The chain is Photosystem I assembly protein Ycf3 from Rippkaea orientalis (strain PCC 8801 / RF-1) (Cyanothece sp. (strain PCC 8801)).